A 561-amino-acid polypeptide reads, in one-letter code: 2-succinyl-5-enolpyruvyl-6-hydroxy-3-cyclohexene-1-carboxylate synthase (561 aa).

This sequence belongs to the TPP enzyme family. MenD subfamily. In terms of assembly, homodimer. Mg(2+) serves as cofactor. It depends on Mn(2+) as a cofactor. Thiamine diphosphate is required as a cofactor.

The catalysed reaction is isochorismate + 2-oxoglutarate + H(+) = 5-enolpyruvoyl-6-hydroxy-2-succinyl-cyclohex-3-ene-1-carboxylate + CO2. It participates in quinol/quinone metabolism; 1,4-dihydroxy-2-naphthoate biosynthesis; 1,4-dihydroxy-2-naphthoate from chorismate: step 2/7. Its pathway is quinol/quinone metabolism; menaquinone biosynthesis. Catalyzes the thiamine diphosphate-dependent decarboxylation of 2-oxoglutarate and the subsequent addition of the resulting succinic semialdehyde-thiamine pyrophosphate anion to isochorismate to yield 2-succinyl-5-enolpyruvyl-6-hydroxy-3-cyclohexene-1-carboxylate (SEPHCHC). The polypeptide is 2-succinyl-5-enolpyruvyl-6-hydroxy-3-cyclohexene-1-carboxylate synthase (Proteus mirabilis (strain HI4320)).